The chain runs to 118 residues: DNA-binding protein MmarC6_0793 (118 aa).

Over residues 1–12 (MNPEEIRQRRLQ) the composition is skewed to basic and acidic residues. Residues 1-33 (MNPEEIRQRRLQEMQAKAQEQGAQDPEAQRQMQ) form a disordered region. Over residues 24–33 (QDPEAQRQMQ) the composition is skewed to low complexity.

This sequence belongs to the PDCD5 family.

The protein is DNA-binding protein MmarC6_0793 of Methanococcus maripaludis (strain C6 / ATCC BAA-1332).